The sequence spans 249 residues: Bacillaene synthase decarboxylase PksI (249 aa).

The active site involves His-230.

It belongs to the enoyl-CoA hydratase/isomerase family. In terms of assembly, homotrimer. Does not form a heterotrimeric complex with PksH.

It is found in the cytoplasm. Its pathway is antibiotic biosynthesis; bacillaene biosynthesis. In terms of biological role, involved in some intermediate steps for the synthesis of the antibiotic polyketide bacillaene which is involved in secondary metabolism. Catalyzes the decarboxylation of the 3-methylglutaconyl group tethered to PksL to a 3-methylcrotonyl moiety. The polypeptide is Bacillaene synthase decarboxylase PksI (pksI) (Bacillus subtilis (strain 168)).